Here is a 118-residue protein sequence, read N- to C-terminus: MQVVVLKLDVHCEKTKQKAMSTVCCLSGVNSVEVKDGKLTVTGEIDAYMIVKKLKKICHTEFISVGPVKEPEKKKPDDPKKPETKPPDVIYHYVPPCPPYYHNFNGCYNEDPNACVTS.

An HMA domain is found at 1 to 65 (MQVVVLKLDV…KICHTEFISV (65 aa)). Residues 68 to 87 (VKEPEKKKPDDPKKPETKPP) are disordered. Basic and acidic residues predominate over residues 69–86 (KEPEKKKPDDPKKPETKP). The residue at position 115 (Cys115) is a Cysteine methyl ester. Residue Cys115 is the site of S-farnesyl cysteine attachment. The propeptide at 116–118 (VTS) is removed in mature form.

It belongs to the HIPP family.

In terms of biological role, probable heavy-metal-binding protein. This chain is Heavy metal-associated isoprenylated plant protein 12, found in Arabidopsis thaliana (Mouse-ear cress).